The chain runs to 242 residues: uncharacterized protein (242 aa).

The 114-residue stretch at threonine 3–asparagine 116 folds into the Response regulatory domain. Aspartate 54 bears the 4-aspartylphosphate mark. The region spanning isoleucine 139–isoleucine 240 is the HTH LytTR-type domain.

This is an uncharacterized protein from Vibrio parahaemolyticus serotype O3:K6 (strain RIMD 2210633).